We begin with the raw amino-acid sequence, 132 residues long: Protein NrdI (132 aa).

It belongs to the NrdI family.

Probably involved in ribonucleotide reductase function. The protein is Protein NrdI of Staphylococcus haemolyticus (strain JCSC1435).